The primary structure comprises 599 residues: E3 ubiquitin-protein ligase Kcmf1 (599 aa).

The ZZ-type zinc-finger motif lies at 4–60 (HEGVSCDSCLKSNFNGRRYKCLICYDYDLCADCYEDGVTSTRHLVEHPMQCILTRSD). Zn(2+)-binding residues include C9, C12, C24, C27, C33, C36, H46, and H50. The segment at 78-101 (FTCPYCKKMGFSDATLLEHVSAEH) adopts a C2H2-type zinc-finger fold. 5 disordered regions span residues 155 to 193 (HGGGVRRIPGRTLGGPRTRRSNMHFSSSSGLSALSPSGR), 229 to 253 (DRQQVTASRQIDRLPRRAHPIVSTS), 269 to 294 (GSGGSGAVGSGSGGGSGATAPPNLRT), 466 to 486 (VEQQQQQQQLQPAMVRQVNQM), and 507 to 599 (NTTQ…PDTR). Low complexity-rich tracts occupy residues 160 to 170 (RRIPGRTLGGP) and 180 to 192 (SSSSGLSALSPSG). Positions 269–285 (GSGGSGAVGSGSGGGSG) are enriched in gly residues. Over residues 513–532 (GTGGLGGAGATAAPGGGASG) the composition is skewed to gly residues. Residues 538–547 (TADRGIERRS) show a composition bias toward basic and acidic residues. Residues 559-593 (SQQPQQQQQSTANPAASQQKYKQNASAATAAGNTN) show a composition bias toward low complexity.

The protein belongs to the KCMF1 family. As to quaternary structure, interacts with poe.

The catalysed reaction is S-ubiquitinyl-[E2 ubiquitin-conjugating enzyme]-L-cysteine + [acceptor protein]-L-lysine = [E2 ubiquitin-conjugating enzyme]-L-cysteine + N(6)-ubiquitinyl-[acceptor protein]-L-lysine.. Has intrinsic E3 ubiquitin ligase activity and promotes ubiquitination. Involved in the negative regulation of the Ras/MAPK signaling pathway in the wing by acting with the E2 enzyme Unc6 and the putative E3 ligases poe and Ufd4 to mediate the ubiquitination and proteasomal degradation of rl/MAPK. The chain is E3 ubiquitin-protein ligase Kcmf1 from Drosophila melanogaster (Fruit fly).